The chain runs to 591 residues: 5'-nucleotidase domain-containing protein DDB_G0275467 (591 aa).

Composition is skewed to low complexity over residues 38–50 (STTT…SYST) and 68–78 (QHQQQQPQQHQ). The segment at 38-88 (STTTTSGIKSYSTHNRSNNDTHTSKSNTIDQHQQQQPQQHQNNDNKHLFTP) is disordered. Residue Asp165 is the Nucleophile of the active site. Positions 165 and 167 each coordinate Mg(2+). Catalysis depends on Asp167, which acts as the Proton donor. 305 to 313 (TAAVGKVHL) serves as a coordination point for substrate. Asp450 contacts Mg(2+).

The protein belongs to the 5'(3')-deoxyribonucleotidase family. Mg(2+) is required as a cofactor.

This chain is 5'-nucleotidase domain-containing protein DDB_G0275467, found in Dictyostelium discoideum (Social amoeba).